The chain runs to 232 residues: 2-C-methyl-D-erythritol 4-phosphate cytidylyltransferase (232 aa).

Belongs to the IspD/TarI cytidylyltransferase family. IspD subfamily.

The enzyme catalyses 2-C-methyl-D-erythritol 4-phosphate + CTP + H(+) = 4-CDP-2-C-methyl-D-erythritol + diphosphate. It functions in the pathway isoprenoid biosynthesis; isopentenyl diphosphate biosynthesis via DXP pathway; isopentenyl diphosphate from 1-deoxy-D-xylulose 5-phosphate: step 2/6. Catalyzes the formation of 4-diphosphocytidyl-2-C-methyl-D-erythritol from CTP and 2-C-methyl-D-erythritol 4-phosphate (MEP). The sequence is that of 2-C-methyl-D-erythritol 4-phosphate cytidylyltransferase from Stenotrophomonas maltophilia (strain K279a).